A 243-amino-acid chain; its full sequence is LexA repressor (243 aa).

Residues 1–30 form a disordered region; that stretch reads MSDDTGEFTDGSTESPADADGAGRRRAVDN. Over residues 21–30 the composition is skewed to basic and acidic residues; that stretch reads GAGRRRAVDN. The segment at residues 56–76 is a DNA-binding region (H-T-H motif); it reads IREIGDAVGLTSTSSVAHQLR. Residues S167 and K204 each act as for autocatalytic cleavage activity in the active site.

Belongs to the peptidase S24 family. As to quaternary structure, homodimer.

It catalyses the reaction Hydrolysis of Ala-|-Gly bond in repressor LexA.. Represses a number of genes involved in the response to DNA damage (SOS response), including recA and lexA. In the presence of single-stranded DNA, RecA interacts with LexA causing an autocatalytic cleavage which disrupts the DNA-binding part of LexA, leading to derepression of the SOS regulon and eventually DNA repair. This Mycolicibacterium smegmatis (strain ATCC 700084 / mc(2)155) (Mycobacterium smegmatis) protein is LexA repressor.